Consider the following 198-residue polypeptide: Na(+)-translocating NADH-quinone reductase subunit E (198 aa).

Transmembrane regions (helical) follow at residues 11–31, 35–55, 77–97, 110–130, 140–160, and 176–196; these read AVFV…FLAV, VSTA…AVPI, FLNF…LEMI, GIFL…SFMV, IVYG…MAGI, and LGIT…FSGV.

The protein belongs to the NqrDE/RnfAE family. Composed of six subunits; NqrA, NqrB, NqrC, NqrD, NqrE and NqrF.

Its subcellular location is the cell inner membrane. The catalysed reaction is a ubiquinone + n Na(+)(in) + NADH + H(+) = a ubiquinol + n Na(+)(out) + NAD(+). In terms of biological role, NQR complex catalyzes the reduction of ubiquinone-1 to ubiquinol by two successive reactions, coupled with the transport of Na(+) ions from the cytoplasm to the periplasm. NqrA to NqrE are probably involved in the second step, the conversion of ubisemiquinone to ubiquinol. The chain is Na(+)-translocating NADH-quinone reductase subunit E from Klebsiella pneumoniae subsp. pneumoniae (strain ATCC 700721 / MGH 78578).